We begin with the raw amino-acid sequence, 98 residues long: Gene 4 protein (98 aa).

In terms of domain architecture, HNH spans 41–73; that stretch reads RAATDVDHKKPGNDHSRSNLQAICRVCHGKKSA. Residues 75-98 form a disordered region; that stretch reads EGVARRRELKARRKRPEQRHPGRR. The span at 81–98 shows a compositional bias: basic residues; sequence RELKARRKRPEQRHPGRR.

The polypeptide is Gene 4 protein (4) (Mycobacterium (Mycobacteriophage D29)).